We begin with the raw amino-acid sequence, 305 residues long: UDP-3-O-acyl-N-acetylglucosamine deacetylase (305 aa).

Histidine 79, histidine 238, and aspartate 242 together coordinate Zn(2+). Histidine 265 serves as the catalytic Proton donor.

This sequence belongs to the LpxC family. Zn(2+) is required as a cofactor.

The enzyme catalyses a UDP-3-O-[(3R)-3-hydroxyacyl]-N-acetyl-alpha-D-glucosamine + H2O = a UDP-3-O-[(3R)-3-hydroxyacyl]-alpha-D-glucosamine + acetate. The protein operates within glycolipid biosynthesis; lipid IV(A) biosynthesis; lipid IV(A) from (3R)-3-hydroxytetradecanoyl-[acyl-carrier-protein] and UDP-N-acetyl-alpha-D-glucosamine: step 2/6. In terms of biological role, catalyzes the hydrolysis of UDP-3-O-myristoyl-N-acetylglucosamine to form UDP-3-O-myristoylglucosamine and acetate, the committed step in lipid A biosynthesis. In Shigella dysenteriae serotype 1 (strain Sd197), this protein is UDP-3-O-acyl-N-acetylglucosamine deacetylase.